Reading from the N-terminus, the 253-residue chain is 5-oxoprolinase subunit A (253 aa).

It belongs to the LamB/PxpA family. Forms a complex composed of PxpA, PxpB and PxpC.

It catalyses the reaction 5-oxo-L-proline + ATP + 2 H2O = L-glutamate + ADP + phosphate + H(+). Its function is as follows. Catalyzes the cleavage of 5-oxoproline to form L-glutamate coupled to the hydrolysis of ATP to ADP and inorganic phosphate. This is 5-oxoprolinase subunit A from Shouchella clausii (strain KSM-K16) (Alkalihalobacillus clausii).